A 761-amino-acid chain; its full sequence is DNA topoisomerase 1 (761 aa).

The Toprim domain occupies 6 to 143 (TALIICEKPS…KRMRFSSLTK (138 aa)). Mg(2+) is bound by residues glutamate 12 and aspartate 111. One can recognise a Topo IA-type catalytic domain in the interval 157–569 (DYGLVDAGES…EAEKRLRKIL (413 aa)). The tract at residues 196–201 (SVGRVQ) is interaction with DNA. Tyrosine 315 acts as the O-(5'-phospho-DNA)-tyrosine intermediate in catalysis. 3 consecutive C4-type zinc fingers follow at residues 600–626 (CPKCGGDLILIRHKKGRFVGCSNYPEC), 680–706 (CPKCGAKLILKKGVYGAFYGCSNYPKC), and 721–747 (CPKCGGDLVVREGKFGKFVGCSNYPKC).

Belongs to the type IA topoisomerase family. Monomer. The cofactor is Mg(2+).

The enzyme catalyses ATP-independent breakage of single-stranded DNA, followed by passage and rejoining.. Its function is as follows. Releases the supercoiling and torsional tension of DNA, which is introduced during the DNA replication and transcription, by transiently cleaving and rejoining one strand of the DNA duplex. Introduces a single-strand break via transesterification at a target site in duplex DNA. The scissile phosphodiester is attacked by the catalytic tyrosine of the enzyme, resulting in the formation of a DNA-(5'-phosphotyrosyl)-enzyme intermediate and the expulsion of a 3'-OH DNA strand. The free DNA strand then undergoes passage around the unbroken strand, thus removing DNA supercoils. Finally, in the religation step, the DNA 3'-OH attacks the covalent intermediate to expel the active-site tyrosine and restore the DNA phosphodiester backbone. The polypeptide is DNA topoisomerase 1 (Methanocaldococcus jannaschii (strain ATCC 43067 / DSM 2661 / JAL-1 / JCM 10045 / NBRC 100440) (Methanococcus jannaschii)).